Reading from the N-terminus, the 491-residue chain is Trypanothione reductase (491 aa).

Residue 35 to 52 (DVQATHGPPALVALGGTC) participates in FAD binding. A disulfide bond links cysteine 52 and cysteine 57. Catalysis depends on histidine 461, which acts as the Proton acceptor.

It belongs to the class-I pyridine nucleotide-disulfide oxidoreductase family. As to quaternary structure, homodimer. It depends on FAD as a cofactor.

It is found in the cytoplasm. It carries out the reaction trypanothione + NADP(+) = trypanothione disulfide + NADPH + H(+). Trypanothione is the parasite analog of glutathione; this enzyme is the equivalent of glutathione reductase. The chain is Trypanothione reductase (TPR) from Leishmania donovani.